The sequence spans 360 residues: Protein phosphatase 1L (360 aa).

At 1–25 the chain is on the extracellular side; that stretch reads MIEDTMTLLSLLGRIMRYFLLRPET. A helical transmembrane segment spans residues 26-42; it reads LFLLCISLALWSYFFHT. The Cytoplasmic portion of the chain corresponds to 43 to 360; the sequence is DEVKTIVKSS…FRNSSKTEEQ (318 aa). Residues 92-351 form the PPM-type phosphatase domain; that stretch reads NVAVYSIQGR…DNITVMVVKF (260 aa). The Mn(2+) site is built by Asp128, Gly129, Asp302, and Asp342.

This sequence belongs to the PP2C family. Interacts with MAP3K7/TAK1 and MAP3K5. Mg(2+) serves as cofactor. The cofactor is Mn(2+).

It localises to the membrane. The catalysed reaction is O-phospho-L-seryl-[protein] + H2O = L-seryl-[protein] + phosphate. The enzyme catalyses O-phospho-L-threonyl-[protein] + H2O = L-threonyl-[protein] + phosphate. Acts as a suppressor of the SAPK signaling pathways by associating with and dephosphorylating MAP3K7/TAK1 and MAP3K5, and by attenuating the association between MAP3K7/TAK1 and MAP2K4 or MAP2K6. The chain is Protein phosphatase 1L (PPM1L) from Bos taurus (Bovine).